Here is a 266-residue protein sequence, read N- to C-terminus: Large ribosomal subunit protein eL8 (266 aa).

The span at 1-11 shows a compositional bias: basic residues; that stretch reads MPKGKKAKGKK. The tract at residues 1–21 is disordered; it reads MPKGKKAKGKKVAPAPSVAKK.

It belongs to the eukaryotic ribosomal protein eL8 family. In terms of assembly, component of the large ribosomal subunit.

It localises to the cytoplasm. Component of the large ribosomal subunit. The ribosome is a large ribonucleoprotein complex responsible for the synthesis of proteins in the cell. This chain is Large ribosomal subunit protein eL8 (rpl7a), found in Ictalurus punctatus (Channel catfish).